The following is a 197-amino-acid chain: Large ribosomal subunit protein bL25 (197 aa).

It belongs to the bacterial ribosomal protein bL25 family. CTC subfamily. As to quaternary structure, part of the 50S ribosomal subunit; part of the 5S rRNA/L5/L18/L25 subcomplex. Contacts the 5S rRNA. Binds to the 5S rRNA independently of L5 and L18.

This is one of the proteins that binds to the 5S RNA in the ribosome where it forms part of the central protuberance. This Streptomyces avermitilis (strain ATCC 31267 / DSM 46492 / JCM 5070 / NBRC 14893 / NCIMB 12804 / NRRL 8165 / MA-4680) protein is Large ribosomal subunit protein bL25.